The primary structure comprises 355 residues: UDP-N-acetylglucosamine--N-acetylmuramyl-(pentapeptide) pyrophosphoryl-undecaprenol N-acetylglucosamine transferase (355 aa).

Residues 14 to 16, asparagine 123, arginine 164, serine 190, and glutamine 284 each bind UDP-N-acetyl-alpha-D-glucosamine; that span reads TGG.

It belongs to the glycosyltransferase 28 family. MurG subfamily.

It is found in the cell inner membrane. The enzyme catalyses di-trans,octa-cis-undecaprenyl diphospho-N-acetyl-alpha-D-muramoyl-L-alanyl-D-glutamyl-meso-2,6-diaminopimeloyl-D-alanyl-D-alanine + UDP-N-acetyl-alpha-D-glucosamine = di-trans,octa-cis-undecaprenyl diphospho-[N-acetyl-alpha-D-glucosaminyl-(1-&gt;4)]-N-acetyl-alpha-D-muramoyl-L-alanyl-D-glutamyl-meso-2,6-diaminopimeloyl-D-alanyl-D-alanine + UDP + H(+). It participates in cell wall biogenesis; peptidoglycan biosynthesis. Cell wall formation. Catalyzes the transfer of a GlcNAc subunit on undecaprenyl-pyrophosphoryl-MurNAc-pentapeptide (lipid intermediate I) to form undecaprenyl-pyrophosphoryl-MurNAc-(pentapeptide)GlcNAc (lipid intermediate II). This chain is UDP-N-acetylglucosamine--N-acetylmuramyl-(pentapeptide) pyrophosphoryl-undecaprenol N-acetylglucosamine transferase, found in Synechocystis sp. (strain ATCC 27184 / PCC 6803 / Kazusa).